The chain runs to 171 residues: Myosin regulatory light chain 12B (171 aa).

At Thr-18 the chain carries Phosphothreonine; by MLCK and ZIPK/DAPK3. Residue Ser-19 is modified to Phosphoserine; by MLCK and ZIPK/DAPK3. EF-hand domains follow at residues 28 to 63 (SQIQ…LGKN), 97 to 132 (DPED…MGDR), and 133 to 168 (FTDE…GAKD). Asp-41, Asn-43, Asp-45, and Asp-52 together coordinate Ca(2+).

In terms of assembly, myosin is a hexamer of 2 heavy chains and 4 light chains: interacts with myosin heavy chain MYO19. In terms of processing, phosphorylation increases the actin-activated myosin ATPase activity and thereby regulates the contractile activity. It is required to generate the driving force in the migration of the cells but not necessary for localization of myosin-2 at the leading edge. Phosphorylation is reduced following epigallocatechin-3-O-gallate treatment.

In terms of biological role, myosin regulatory subunit that plays an important role in regulation of both smooth muscle and nonmuscle cell contractile activity via its phosphorylation. Phosphorylation triggers actin polymerization in vascular smooth muscle. Implicated in cytokinesis, receptor capping, and cell locomotion. The protein is Myosin regulatory light chain 12B (MYL12B) of Bos taurus (Bovine).